The following is a 630-amino-acid chain: Long-chain-fatty-acid--AMP ligase FadD32 (630 aa).

Residues 187-192 (TSGSTR), Ser-342, Ala-346, Asp-469, and Arg-483 each bind ATP.

The protein belongs to the ATP-dependent AMP-binding enzyme family. Monomer.

It catalyses the reaction a long-chain fatty acid + holo-[ACP] + ATP = a long-chain fatty acyl-[ACP] + AMP + diphosphate. It carries out the reaction decanoate + ATP + H(+) = decanoyl-AMP + diphosphate. The catalysed reaction is dodecanoate + ATP + H(+) = dodecanoyl-AMP + diphosphate. The enzyme catalyses tetradecanoate + ATP + H(+) = tetradecanoyl-AMP + diphosphate. Its pathway is lipid metabolism; mycolic acid biosynthesis. Its activity is regulated as follows. The acyl-AMP ligase activity is inhibited by the alkylphosphate ester of AMP, adenosine 50-dodecylphosphate (AMPC12). Also inhibited by eicosyl-AMP (AMPC20). Involved in the biosynthesis of mycolic acids. Catalyzes the activation of long-chain fatty acids as acyl-adenylates (acyl-AMP), which are then transferred to the phosphopantetheine arm of the polyketide synthase Pks13 for further chain extension. Can use decanoate (C10), dodecanoate (C12) and tetradecanoate (C14). The chain is Long-chain-fatty-acid--AMP ligase FadD32 from Mycolicibacterium smegmatis (strain ATCC 700084 / mc(2)155) (Mycobacterium smegmatis).